Here is a 282-residue protein sequence, read N- to C-terminus: MSLKSYMQLVRIHNVIGAALGAIMGFLVSSQWYLELKGILLSALVVGLIAAGGYVINDVYDVEIDKINKPYRPIPSGKISVNKAKALSIALFIIGIALSILLNIYALVIALVTAIGLIYYAKDLKKTGFYGNLLVATTTALSIFYGGLAFFSDNWLLRIIIPTLYAFFLTLIREIVKGIEDYNGDSLNNVKTLATTLGINKSWRIAKILLVLLLIISPLPFFIGFNLIYLILLILVFIPFTILSIIQKETIEGASKARTYLKISAISGIIAFLLGSLPFFKG.

9 helical membrane-spanning segments follow: residues 15–35 (VIGA…WYLE), 36–56 (LKGI…GYVI), 81–100 (VNKA…ALSI), 104–121 (IYAL…IYYA), 131–151 (GNLL…LAFF), 159–179 (IIIP…VKGI), 201–221 (KSWR…PLPF), 222–242 (FIGF…PFTI), and 260–280 (YLKI…LPFF).

This sequence belongs to the UbiA prenyltransferase family. DGGGP synthase subfamily. Requires Mg(2+) as cofactor. Ca(2+) is required as a cofactor.

It localises to the cell membrane. The catalysed reaction is sn-3-O-(geranylgeranyl)glycerol 1-phosphate + (2E,6E,10E)-geranylgeranyl diphosphate = 2,3-bis-O-(geranylgeranyl)-sn-glycerol 1-phosphate + diphosphate. It functions in the pathway membrane lipid metabolism; glycerophospholipid metabolism. Its activity is regulated as follows. Inhibited by EDTA in vitro. In terms of biological role, prenyltransferase that catalyzes the transfer of the geranylgeranyl moiety of geranylgeranyl diphosphate (GGPP) to the C2 hydroxyl of (S)-3-O-geranylgeranylglyceryl phosphate (GGGP). This reaction is the second ether-bond-formation step in the biosynthesis of archaeal membrane lipids. Cannot use other prenyl donors, i.e. farnesyl diphosphate (FPP) and phytyl diphosphate. Moreover, 4-hydroxybenzoate, 1,4-dihydroxy 2-naphthoate, homogentisate, and alpha-glycerophosphate do not function as prenyl acceptor substrates. The chain is Digeranylgeranylglyceryl phosphate synthase (ubiA-2) from Saccharolobus solfataricus (strain ATCC 35092 / DSM 1617 / JCM 11322 / P2) (Sulfolobus solfataricus).